A 76-amino-acid chain; its full sequence is Alpha/kappa-conotoxin-like fe14.2 (76 aa).

The first 24 residues, 1 to 24 (MPSVRSVTCCCLLWMMLSVQLVTP), serve as a signal peptide directing secretion. Residues 25–39 (GSPGTAQLSGQRTAR) constitute a propeptide that is removed on maturation. Disulfide bonds link C46-C61 and C50-C63. The residue at position 64 (R64) is an Arginine amide. Positions 65-76 (GKRDVVSSSMAV) are excised as a propeptide.

This sequence belongs to the conotoxin J superfamily. As to expression, expressed by the venom duct.

Its subcellular location is the secreted. Functionally, highly inhibits both nicotinic acetylcholine receptors (neuronal (alpha-3/beta-4) and muscular (alpha-1/beta-1/epsilon/delta) subtypes) and the voltage-gated potassium channel Kv1.6/KCNA6 subtype. This is Alpha/kappa-conotoxin-like fe14.2 from Conus ferrugineus (Cone snail).